We begin with the raw amino-acid sequence, 346 residues long: Cell division protein ZipA (346 aa).

Residues 1 to 6 (MEDLQL) lie on the Periplasmic side of the membrane. The helical transmembrane segment at 7–27 (VLFVLGAIAIVAVLVHGFWSI) threads the bilayer. Topologically, residues 28–346 (RRQQPKSLKD…DYLHRIRANA (319 aa)) are cytoplasmic. Disordered stretches follow at residues 76-103 (ANEAHTPEAPAFNPYLKQEAKTQPQPVE) and 121-145 (QPDFSLQSPTAKEQHRGPKASRQEP).

This sequence belongs to the ZipA family. As to quaternary structure, interacts with FtsZ via their C-terminal domains.

The protein resides in the cell inner membrane. Functionally, essential cell division protein that stabilizes the FtsZ protofilaments by cross-linking them and that serves as a cytoplasmic membrane anchor for the Z ring. Also required for the recruitment to the septal ring of downstream cell division proteins. The sequence is that of Cell division protein ZipA from Shewanella sp. (strain MR-4).